We begin with the raw amino-acid sequence, 472 residues long: Protein nucleotidyltransferase YdiU (472 aa).

Positions 86, 88, 89, 109, 121, 122, 172, and 179 each coordinate ATP. The Proton acceptor role is filled by Asp-244. Mg(2+) is bound by residues Asn-245 and Asp-254. Residue Asp-254 participates in ATP binding.

This sequence belongs to the SELO family. Mg(2+) is required as a cofactor. It depends on Mn(2+) as a cofactor.

It carries out the reaction L-seryl-[protein] + ATP = 3-O-(5'-adenylyl)-L-seryl-[protein] + diphosphate. The catalysed reaction is L-threonyl-[protein] + ATP = 3-O-(5'-adenylyl)-L-threonyl-[protein] + diphosphate. It catalyses the reaction L-tyrosyl-[protein] + ATP = O-(5'-adenylyl)-L-tyrosyl-[protein] + diphosphate. The enzyme catalyses L-histidyl-[protein] + UTP = N(tele)-(5'-uridylyl)-L-histidyl-[protein] + diphosphate. It carries out the reaction L-seryl-[protein] + UTP = O-(5'-uridylyl)-L-seryl-[protein] + diphosphate. The catalysed reaction is L-tyrosyl-[protein] + UTP = O-(5'-uridylyl)-L-tyrosyl-[protein] + diphosphate. In terms of biological role, nucleotidyltransferase involved in the post-translational modification of proteins. It can catalyze the addition of adenosine monophosphate (AMP) or uridine monophosphate (UMP) to a protein, resulting in modifications known as AMPylation and UMPylation. This is Protein nucleotidyltransferase YdiU from Ruegeria sp. (strain TM1040) (Silicibacter sp.).